A 3083-amino-acid chain; its full sequence is Genome polyprotein (3083 aa).

A Peptidase S30 domain is found at Ile-173–Tyr-313. Ser-267 acts as the For P1 proteinase activity in catalysis. The Involved in interaction with stylet and aphid transmission motif lies at Lys-365 to Cys-368. The Involved in virions binding and aphid transmission signature appears at Pro-621–Lys-623. Positions Met-647–Gly-769 constitute a Peptidase C6 domain. Active-site for helper component proteinase activity residues include Cys-655 and His-728. The Helicase ATP-binding domain occupies Glu-1239–Glu-1391. Gly-1252–Ser-1259 contacts ATP. The DECH box motif lies at Asp-1341–His-1344. The region spanning Asp-1410–Ser-1569 is the Helicase C-terminal domain. A Nuclear localization signal motif is present at residues Lys-1894–Ser-1903. Tyr-1918 is modified (O-(5'-phospho-RNA)-tyrosine). The region spanning Ser-2045–Asp-2263 is the Peptidase C4 domain. Active-site for nuclear inclusion protein A activity residues include His-2090, Asp-2125, and Cys-2195. The RdRp catalytic domain occupies Trp-2529–Leu-2653. The disordered stretch occupies residues Gln-2808–His-2855. A compositionally biased stretch (basic and acidic residues) spans Ser-2817–Val-2831. Residues Ala-2832–Ala-2844 are compositionally biased toward low complexity. A Phosphothreonine modification is found at Thr-3065.

Belongs to the potyviridae genome polyprotein family. In terms of assembly, interacts with host eIF4E protein (via cap-binding region); this interaction mediates the translation of the VPg-viral RNA conjugates. Part of a complex that comprises VPg, RNA, host EIF4E and EIF4G; this interaction mediates the translation of the VPg-viral RNA conjugates. In terms of processing, VPg is uridylylated by the polymerase and is covalently attached to the 5'-end of the genomic RNA. This uridylylated form acts as a nucleotide-peptide primer for the polymerase. Post-translationally, potyviral RNA is expressed as two polyproteins which undergo post-translational proteolytic processing. Genome polyprotein is processed by NIa-pro, P1 and HC-pro proteinases resulting in the production of at least ten individual proteins. P3N-PIPO polyprotein is cleaved by P1 and HC-pro proteinases resulting in the production of three individual proteins. The P1 proteinase and the HC-pro cleave only their respective C-termini autocatalytically. 6K1 is essential for proper proteolytic separation of P3 from CI.

It localises to the host cytoplasmic vesicle. The protein resides in the host nucleus. Its subcellular location is the virion. The catalysed reaction is RNA(n) + a ribonucleoside 5'-triphosphate = RNA(n+1) + diphosphate. It catalyses the reaction Hydrolyzes glutaminyl bonds, and activity is further restricted by preferences for the amino acids in P6 - P1' that vary with the species of potyvirus, e.g. Glu-Xaa-Xaa-Tyr-Xaa-Gln-|-(Ser or Gly) for the enzyme from tobacco etch virus. The natural substrate is the viral polyprotein, but other proteins and oligopeptides containing the appropriate consensus sequence are also cleaved.. It carries out the reaction Hydrolyzes a Gly-|-Gly bond at its own C-terminus, commonly in the sequence -Tyr-Xaa-Val-Gly-|-Gly, in the processing of the potyviral polyprotein.. Required for aphid transmission and also has proteolytic activity. Only cleaves a Gly-Gly dipeptide at its own C-terminus. Interacts with virions and aphid stylets. Acts as a suppressor of RNA-mediated gene silencing, also known as post-transcriptional gene silencing (PTGS), a mechanism of plant viral defense that limits the accumulation of viral RNAs. May have RNA-binding activity. In terms of biological role, has helicase activity. It may be involved in replication. Functionally, indispensable for virus replication. Reduces the abundance of host transcripts related to jasmonic acid biosynthesis therefore altering the host defenses. In order to increase its own stability, decreases host protein degradation pathways. Its function is as follows. Indispensable for virus replication. Mediates the cap-independent, EIF4E-dependent translation of viral genomic RNAs. Binds to the cap-binding site of host EIF4E and thus interferes with the host EIF4E-dependent mRNA export and translation. VPg-RNA directly binds EIF4E and is a template for transcription. Also forms trimeric complexes with EIF4E-EIF4G, which are templates for translation. In terms of biological role, has RNA-binding and proteolytic activities. Functionally, an RNA-dependent RNA polymerase that plays an essential role in the virus replication. Its function is as follows. Involved in aphid transmission, cell-to-cell and systemis movement, encapsidation of the viral RNA and in the regulation of viral RNA amplification. The sequence is that of Genome polyprotein from Zucchini yellow mosaic virus (strain Singapore) (ZYMV).